Reading from the N-terminus, the 146-residue chain is Putative ankyrin repeat protein FPV224 (146 aa).

4 ANK repeats span residues Ser9–Ile38, Lys42–Ile79, Tyr94–Glu126, and Tyr127–Asn145.

This is Putative ankyrin repeat protein FPV224 from Fowlpox virus (strain NVSL) (FPV).